The chain runs to 285 residues: NADH-cytochrome b5 reductase 1 (285 aa).

Residues 7-23 traverse the membrane as a helical segment; the sequence is LATFSVLVLFYKLFTYS. The 105-residue stretch at 40 to 144 folds into the FAD-binding FR-type domain; the sequence is TEFREFELVE…SGPRGFYEYV (105 aa). FAD is bound by residues 124 to 139 and 150 to 182; these read GDMK…GPRG and HLAM…RVTL.

Belongs to the flavoprotein pyridine nucleotide cytochrome reductase family. Monomer. Component of the 2-(3-amino-3-carboxypropyl)histidine synthase complex composed of DPH1, DPH2, DPH3 and a NADH-dependent reductase, predominantly CBR1. It depends on FAD as a cofactor.

The protein resides in the mitochondrion outer membrane. It catalyses the reaction 2 Fe(III)-[cytochrome b5] + NADH = 2 Fe(II)-[cytochrome b5] + NAD(+) + H(+). The catalysed reaction is 2 Fe(3+)-[Dph3] + NADH = 2 Fe(2+)-[Dph3] + NAD(+) + H(+). It functions in the pathway protein modification; peptidyl-diphthamide biosynthesis. In terms of biological role, NADH-dependent reductase for DPH3 and cytochrome b5. Required for the first step of diphthamide biosynthesis, a post-translational modification of histidine which occurs in elongation factor 2. DPH1 and DPH2 transfer a 3-amino-3-carboxypropyl (ACP) group from S-adenosyl-L-methionine (SAM) to a histidine residue, the reaction is assisted by a reduction system comprising DPH3 and a NADH-dependent reductase, predominantly CBR1. By reducing DPH3, also involved in the formation of the tRNA wobble base modification mcm5s 2U (5-methoxycarbonylmethyl-2-thiouridine), mediated by the elongator complex. The cytochrome b5/NADH cytochrome b5 reductase electron transfer system supports the catalytic activity of several sterol biosynthetic enzymes. The sequence is that of NADH-cytochrome b5 reductase 1 (CBR1) from Candida glabrata (strain ATCC 2001 / BCRC 20586 / JCM 3761 / NBRC 0622 / NRRL Y-65 / CBS 138) (Yeast).